Reading from the N-terminus, the 236-residue chain is Activating transcription factor of chaperone (236 aa).

A disordered region spans residues 117–185 (HRASQLASPQ…KNAATRYRQK (69 aa)). The span at 120 to 137 (SQLASPQHSSSSANASPR) shows a compositional bias: low complexity. Positions 162 to 175 (RPVDDRRSRKKEQN) are enriched in basic and acidic residues. The 64-residue stretch at 165–228 (DDRRSRKKEQ…RYLKALMRDL (64 aa)) folds into the bZIP domain. Positions 167–187 (RRSRKKEQNKNAATRYRQKKK) are basic motif. The leucine-zipper stretch occupies residues 193–228 (LLKEEQTLRQRHTELGEKCSDLQREIRYLKALMRDL).

This sequence belongs to the bZIP family. Binds DNA as a dimer.

The protein resides in the nucleus. Its function is as follows. Transcriptional activator that acts in the unfolded protein response (UPR) pathway. Acts during endoplasmic reticulum (ER) stress by activating UPR target genes via direct binding to the UPR element (UPRE) (5'-GGAACTGGACAGCGTGTCGAAA-3'). Activates expression of ER chaperones ERP72 and PDI. The sequence is that of Activating transcription factor of chaperone from Bombyx mori (Silk moth).